Consider the following 165-residue polypeptide: RNA pyrophosphohydrolase (165 aa).

One can recognise a Nudix hydrolase domain in the interval 6 to 149 (GYRPNVGIII…KQSVYHQALT (144 aa)). Positions 38-59 (GGVRENETPQQAVFRELKEEVG) match the Nudix box motif.

Belongs to the Nudix hydrolase family. RppH subfamily. It depends on a divalent metal cation as a cofactor.

Functionally, accelerates the degradation of transcripts by removing pyrophosphate from the 5'-end of triphosphorylated RNA, leading to a more labile monophosphorylated state that can stimulate subsequent ribonuclease cleavage. The chain is RNA pyrophosphohydrolase from Hydrogenovibrio crunogenus (strain DSM 25203 / XCL-2) (Thiomicrospira crunogena).